The following is a 163-amino-acid chain: UPF0416 protein RBE_0909 (163 aa).

This sequence belongs to the UPF0416 family.

The chain is UPF0416 protein RBE_0909 from Rickettsia bellii (strain RML369-C).